We begin with the raw amino-acid sequence, 467 residues long: UDP-N-acetylmuramate--L-alanine ligase (467 aa).

Position 114–120 (114–120) interacts with ATP; the sequence is GTHGKTT.

Belongs to the MurCDEF family.

The protein localises to the cytoplasm. It carries out the reaction UDP-N-acetyl-alpha-D-muramate + L-alanine + ATP = UDP-N-acetyl-alpha-D-muramoyl-L-alanine + ADP + phosphate + H(+). It participates in cell wall biogenesis; peptidoglycan biosynthesis. Cell wall formation. The chain is UDP-N-acetylmuramate--L-alanine ligase from Bradyrhizobium sp. (strain BTAi1 / ATCC BAA-1182).